The primary structure comprises 301 residues: Ribonuclease Z (301 aa).

7 residues coordinate Zn(2+): His-63, His-65, Asp-67, His-68, His-141, Asp-204, and His-262. The active-site Proton acceptor is Asp-67.

Belongs to the RNase Z family. In terms of assembly, homodimer. Requires Zn(2+) as cofactor.

The enzyme catalyses Endonucleolytic cleavage of RNA, removing extra 3' nucleotides from tRNA precursor, generating 3' termini of tRNAs. A 3'-hydroxy group is left at the tRNA terminus and a 5'-phosphoryl group is left at the trailer molecule.. Its function is as follows. Zinc phosphodiesterase, which displays some tRNA 3'-processing endonuclease activity. Probably involved in tRNA maturation, by removing a 3'-trailer from precursor tRNA. This chain is Ribonuclease Z, found in Streptomyces coelicolor (strain ATCC BAA-471 / A3(2) / M145).